The chain runs to 259 residues: Eukaryotic translation initiation factor 3 subunit J (259 aa).

A sufficient for interaction with EIF3B region spans residues 1–70 (MAAAAAAAAG…KEEAEVKPEV (70 aa)). The interval 1 to 111 (MAAAAAAAAG…EPEESKVLTP (111 aa)) is disordered. Residues Ser-12, Ser-14, and Ser-21 each carry the phosphoserine modification. Acidic residues predominate over residues 41–62 (EGEDEDEDVKDNWDDDDDENKE). Basic and acidic residues predominate over residues 63–107 (EAEVKPEVKISEKKKIAEKIKEKERQQKKRQEEIKKRLEEPEESK). Residues 71-136 (KISEKKKIAE…ESDLELAKET (66 aa)) adopt a coiled-coil conformation. Residue Lys-107 forms a Glycyl lysine isopeptide (Lys-Gly) (interchain with G-Cter in SUMO2) linkage. Thr-110 bears the Phosphothreonine mark. Position 128 is a phosphoserine (Ser-128). The disordered stretch occupies residues 218–247 (SKAKKKKKGVVPGGGLKATMKDDLADYGGY). Positions 244 to 259 (YGGYDGGYVQDYEDFM) are promotes stable association with the 40S ribosome. Tyr-255 bears the Phosphotyrosine mark.

This sequence belongs to the eIF-3 subunit J family. As to quaternary structure, component of the eukaryotic translation initiation factor 3 (eIF-3) complex, which is composed of 13 subunits: EIF3A, EIF3B, EIF3C, EIF3D, EIF3E, EIF3F, EIF3G, EIF3H, EIF3I, EIF3J, EIF3K, EIF3L and EIF3M. The eIF-3 complex appears to include 3 stable modules: module A is composed of EIF3A, EIF3B, EIF3G and EIF3I; module B is composed of EIF3F, EIF3H, and EIF3M; and module C is composed of EIF3C, EIF3D, EIF3E, EIF3K and EIF3L. EIF3C of module C binds EIF3B of module A and EIF3H of module B, thereby linking the three modules. EIF3J is a labile subunit that binds to the eIF-3 complex via EIF3B. The eIF-3 complex interacts with RPS6KB1 under conditions of nutrient depletion. Mitogenic stimulation leads to binding and activation of a complex composed of MTOR and RPTOR, leading to phosphorylation and release of RPS6KB1 and binding of EIF4B to eIF-3. In terms of processing, phosphorylated. Phosphorylation is enhanced upon serum stimulation.

The protein localises to the cytoplasm. In terms of biological role, component of the eukaryotic translation initiation factor 3 (eIF-3) complex, which is required for several steps in the initiation of protein synthesis. The eIF-3 complex associates with the 40S ribosome and facilitates the recruitment of eIF-1, eIF-1A, eIF-2:GTP:methionyl-tRNAi and eIF-5 to form the 43S pre-initiation complex (43S PIC). The eIF-3 complex stimulates mRNA recruitment to the 43S PIC and scanning of the mRNA for AUG recognition. The eIF-3 complex is also required for disassembly and recycling of post-termination ribosomal complexes and subsequently prevents premature joining of the 40S and 60S ribosomal subunits prior to initiation. The eIF-3 complex specifically targets and initiates translation of a subset of mRNAs involved in cell proliferation, including cell cycling, differentiation and apoptosis, and uses different modes of RNA stem-loop binding to exert either translational activation or repression. This subunit binds directly within the mRNA entry channel of the 40S ribosome to the aminoacyl (A) site. It may regulate the interaction between the 43S PIC and mRNA. This Rattus norvegicus (Rat) protein is Eukaryotic translation initiation factor 3 subunit J (Eif3j).